The chain runs to 618 residues: Baculoviral IAP repeat-containing protein 2 (618 aa).

BIR repeat units lie at residues 46–113 (ELYR…CSFI), 184–250 (EEAR…CPFL), and 269–336 (HAAR…CEFL). The Zn(2+) site is built by cysteine 306, cysteine 309, histidine 326, and cysteine 333. One can recognise a CARD domain in the interval 453-543 (MASDDLSLIR…TLYKNLFVDK (91 aa)). The RING-type zinc finger occupies 571–606 (CKVCMDKEVSVVFIPCGHLVVCQECAPSLRKCPICR).

It belongs to the IAP family. As to quaternary structure, interacts with DIABLO/SMAC and with PRSS25; these interactions inhibit apoptotic suppressor activity. Interacts with CASP9. Interacts (via BIR domains) with TRAF2; the interaction is required for IKBKE ubiquitination. Interacts with E2F1, RIPK1, RIPK2, RIPK3, RIPK4, BIRC5/survivin and USP19. HSP90AB1. Interacts with UBXN1. Interacts with GSK3B. Interacts with several death receptors, inclusing FAS, TNFRSF10A and TNFRSF10B. Recruited to TNFRSF10B in the absence of receptor stimulation. When TNFRSF10B is stimulated, further recruited to the receptor and cleaved by caspases. Proteolytic fragments remain associated with TNFRSF10B. Post-translationally, auto-ubiquitinated and degraded by the proteasome in apoptotic cells. In terms of processing, upon stimulation of death receptors, including TNFRSF10B, recruited to receptors and cleaved by caspases. Proteolytic fragments remain associated with the receptors. This cleavage presumably inactivates the protein. Present in many fetal and adult tissues. Mainly expressed in adult skeletal muscle, thymus, testis, ovary, and pancreas, low or absent in brain and peripheral blood leukocytes.

The protein localises to the cytoplasm. It localises to the nucleus. It catalyses the reaction S-ubiquitinyl-[E2 ubiquitin-conjugating enzyme]-L-cysteine + [acceptor protein]-L-lysine = [E2 ubiquitin-conjugating enzyme]-L-cysteine + N(6)-ubiquitinyl-[acceptor protein]-L-lysine.. The CARD domain inhibits the activation of E3 ubiquitin ligase activity by preventing RING domain dimerization and E2 ubiquitin donor binding and activation. The CARD domain-mediated autoinhibition of the E3 ubiquitin-protein ligase activity suppresses cell proliferation and migration. USP19 regulates the stability of BIRC2/c-IAP1 by preventing its ubiquitination. Its function is as follows. Multi-functional protein which regulates not only caspases and apoptosis, but also modulates inflammatory signaling and immunity, mitogenic kinase signaling, and cell proliferation, as well as cell invasion and metastasis. Acts as an E3 ubiquitin-protein ligase regulating NF-kappa-B signaling and regulates both canonical and non-canonical NF-kappa-B signaling by acting in opposite directions: acts as a positive regulator of the canonical pathway and suppresses constitutive activation of non-canonical NF-kappa-B signaling. The target proteins for its E3 ubiquitin-protein ligase activity include: RIPK1, RIPK2, RIPK3, RIPK4, CASP3, CASP7, CASP8, TRAF2, DIABLO/SMAC, MAP3K14/NIK, MAP3K5/ASK1, IKBKG/NEMO, IKBKE and MXD1/MAD1. Can also function as an E3 ubiquitin-protein ligase of the NEDD8 conjugation pathway, targeting effector caspases for neddylation and inactivation. Acts as an important regulator of innate immune signaling via regulation of Toll-like receptors (TLRs), Nodlike receptors (NLRs) and RIG-I like receptors (RLRs), collectively referred to as pattern recognition receptors (PRRs). Protects cells from spontaneous formation of the ripoptosome, a large multi-protein complex that has the capability to kill cancer cells in a caspase-dependent and caspase-independent manner. Suppresses ripoptosome formation by ubiquitinating RIPK1 and CASP8. Can stimulate the transcriptional activity of E2F1. Plays a role in the modulation of the cell cycle. The protein is Baculoviral IAP repeat-containing protein 2 (BIRC2) of Homo sapiens (Human).